A 79-amino-acid polypeptide reads, in one-letter code: uncharacterized protein (79 aa).

The helical transmembrane segment at 53-73 (LFFAYMVAYIGFGILSIGMIV) threads the bilayer.

It localises to the membrane. This is an uncharacterized protein from Escherichia coli O157:H7.